Here is a 700-residue protein sequence, read N- to C-terminus: ATP-dependent zinc metalloprotease FtsH (700 aa).

Residues 1-20 (MSSDNGSGRQGGDRGGSTGY) lie on the Cytoplasmic side of the membrane. The chain crosses the membrane as a helical span at residues 21-41 (NLLMYLGFGAIIATLVALYVL). Topologically, residues 42–171 (QMFQTSLDYT…FRHADPPGPW (130 aa)) are periplasmic. The chain crosses the membrane as a helical span at residues 172-192 (EQHSQLIIGMLLAAMLIYIVV). Topologically, residues 193 to 700 (RRLSAAGSPM…ITAPATERSG (508 aa)) are cytoplasmic. 262-269 (GPPGTGKT) is a binding site for ATP. A Zn(2+)-binding site is contributed by His484. Residue Glu485 is part of the active site. Residues His488 and Asp561 each contribute to the Zn(2+) site.

It in the central section; belongs to the AAA ATPase family. In the C-terminal section; belongs to the peptidase M41 family. In terms of assembly, homohexamer. It depends on Zn(2+) as a cofactor.

The protein localises to the cell inner membrane. In terms of biological role, acts as a processive, ATP-dependent zinc metallopeptidase for both cytoplasmic and membrane proteins. Plays a role in the quality control of integral membrane proteins. In Pirellula staleyi (strain ATCC 27377 / DSM 6068 / ICPB 4128) (Pirella staleyi), this protein is ATP-dependent zinc metalloprotease FtsH.